Here is a 278-residue protein sequence, read N- to C-terminus: Ribosomal RNA small subunit methyltransferase A (278 aa).

Residues Asn-27, Leu-29, Gly-54, Glu-75, Asp-95, and Asn-118 each coordinate S-adenosyl-L-methionine.

It belongs to the class I-like SAM-binding methyltransferase superfamily. rRNA adenine N(6)-methyltransferase family. RsmA subfamily.

Its subcellular location is the cytoplasm. It catalyses the reaction adenosine(1518)/adenosine(1519) in 16S rRNA + 4 S-adenosyl-L-methionine = N(6)-dimethyladenosine(1518)/N(6)-dimethyladenosine(1519) in 16S rRNA + 4 S-adenosyl-L-homocysteine + 4 H(+). Its function is as follows. Specifically dimethylates two adjacent adenosines (A1518 and A1519) in the loop of a conserved hairpin near the 3'-end of 16S rRNA in the 30S particle. May play a critical role in biogenesis of 30S subunits. This is Ribosomal RNA small subunit methyltransferase A from Chlamydia caviae (strain ATCC VR-813 / DSM 19441 / 03DC25 / GPIC) (Chlamydophila caviae).